The chain runs to 486 residues: UDP-N-acetylmuramate--L-alanine ligase (486 aa).

129–135 lines the ATP pocket; the sequence is GTHGKTT.

Belongs to the MurCDEF family.

The protein resides in the cytoplasm. It carries out the reaction UDP-N-acetyl-alpha-D-muramate + L-alanine + ATP = UDP-N-acetyl-alpha-D-muramoyl-L-alanine + ADP + phosphate + H(+). Its pathway is cell wall biogenesis; peptidoglycan biosynthesis. Cell wall formation. The protein is UDP-N-acetylmuramate--L-alanine ligase of Vibrio vulnificus (strain YJ016).